The chain runs to 415 residues: Leucine-rich repeat-containing protein 34 (415 aa).

LRR repeat units follow at residues 246–272 (SLRY…LKSN) and 274–296 (TLEV…LSET).

In terms of assembly, interacts with NPM1 and NCL. As to expression, expressed in testis where it specifically localizes to germ cells (at protein level). Not detected in other tissues tested (at protein level). Expressed in pluripotent embryonic stem cells and multipotent adult germline stem cells.

The protein resides in the nucleus. The protein localises to the nucleolus. Its subcellular location is the cytoplasm. Functionally, highly expressed in stem cells where it may be involved in regulation of pluripotency. In embryonic stem cells (ESCs), important for normal expression of the pluripotency regulators POU5F1/OCT4 and KLF4. Also important for expression of the ectodermal marker gene NES and the endodermal marker gene GATA4. Promotes stem cell proliferation in vitro. The polypeptide is Leucine-rich repeat-containing protein 34 (Mus musculus (Mouse)).